The chain runs to 344 residues: MKDLGAEHLAGHEGVQLLGLLNVYLEQEERFQPREKGLSLIEATPENDNTLCPGLRNAKVEDLRSLANFFGSCTETFVLAVNILDRFLALMKVKPKHLSCIGVCSFLLAARIVEEDCNIPSTHDVIRISQCKCTASDIKRMEKIISEKLHYELEATTALNFLHLYHTIILCHTSERKEILSLDKLEAQLKACNCRLIFSKAKPSVLALCLLNLEVETLKSVELLEILLLVKKHSKINDTEFFYWRELVSKCLAEYSSPECCKPDLKKLVWIVSRRTAQNLHNSYYSVPELPTIPEGGCFDESESEDSCEDMSCGEESLSSSPPSDQECTFFFNFKVAQTLCFPS.

Acidic residues predominate over residues 301-313; it reads ESESEDSCEDMSC. The segment at 301–320 is disordered; the sequence is ESESEDSCEDMSCGEESLSS.

It belongs to the cyclin family. Cyclin G subfamily. As to expression, high levels in cerebellum, thymus, spleen and prostate. Low levels in skeletal muscle.

Its subcellular location is the cytoplasm. May play a role in growth regulation and in negative regulation of cell cycle progression. This chain is Cyclin-G2 (CCNG2), found in Homo sapiens (Human).